A 775-amino-acid polypeptide reads, in one-letter code: Lon protease (775 aa).

The region spanning 6 to 207 (LPLMALRDIV…TIINILTSNI (202 aa)) is the Lon N-terminal domain. 356–363 (GPPGVGKT) provides a ligand contact to ATP. In terms of domain architecture, Lon proteolytic spans 592–773 (NDQIGSTTGL…DQVLEHALTK (182 aa)). Residues S679 and K722 contribute to the active site.

This sequence belongs to the peptidase S16 family. As to quaternary structure, homohexamer. Organized in a ring with a central cavity.

The protein localises to the cytoplasm. It carries out the reaction Hydrolysis of proteins in presence of ATP.. ATP-dependent serine protease that mediates the selective degradation of mutant and abnormal proteins as well as certain short-lived regulatory proteins. Required for cellular homeostasis and for survival from DNA damage and developmental changes induced by stress. Degrades polypeptides processively to yield small peptide fragments that are 5 to 10 amino acids long. Binds to DNA in a double-stranded, site-specific manner. This chain is Lon protease, found in Rickettsia bellii (strain RML369-C).